Reading from the N-terminus, the 439-residue chain is Oxysterol-binding protein 6 (439 aa).

Disordered regions lie at residues 1 to 40 and 409 to 439; these read MSAK…SGAD and ESST…QTTN. Polar residues-rich tracts occupy residues 409-419 and 429-439; these read ESSTPNLSKVD and PVDNSIPQTTN.

This sequence belongs to the OSBP family.

The protein is Oxysterol-binding protein 6 (osbF) of Dictyostelium discoideum (Social amoeba).